A 201-amino-acid polypeptide reads, in one-letter code: Holliday junction resolvase RecU (201 aa).

Residues threonine 87, aspartate 89, aspartate 102, and glutamine 121 each coordinate Mg(2+).

The protein belongs to the RecU family. It depends on Mg(2+) as a cofactor.

The protein localises to the cytoplasm. It catalyses the reaction Endonucleolytic cleavage at a junction such as a reciprocal single-stranded crossover between two homologous DNA duplexes (Holliday junction).. Its function is as follows. Endonuclease that resolves Holliday junction intermediates in genetic recombination. Cleaves mobile four-strand junctions by introducing symmetrical nicks in paired strands. Promotes annealing of linear ssDNA with homologous dsDNA. Required for DNA repair, homologous recombination and chromosome segregation. In Levilactobacillus brevis (strain ATCC 367 / BCRC 12310 / CIP 105137 / JCM 1170 / LMG 11437 / NCIMB 947 / NCTC 947) (Lactobacillus brevis), this protein is Holliday junction resolvase RecU.